Reading from the N-terminus, the 318-residue chain is Ferredoxin--NADP reductase (318 aa).

Residues D33, Q41, Y46, V84, F115, D276, and T316 each contribute to the FAD site.

Belongs to the ferredoxin--NADP reductase type 2 family. In terms of assembly, homodimer. FAD is required as a cofactor.

The enzyme catalyses 2 reduced [2Fe-2S]-[ferredoxin] + NADP(+) + H(+) = 2 oxidized [2Fe-2S]-[ferredoxin] + NADPH. This Lactobacillus gasseri (strain ATCC 33323 / DSM 20243 / BCRC 14619 / CIP 102991 / JCM 1131 / KCTC 3163 / NCIMB 11718 / NCTC 13722 / AM63) protein is Ferredoxin--NADP reductase.